The following is a 274-amino-acid chain: Undecaprenyl-diphosphatase (274 aa).

Transmembrane regions (helical) follow at residues 4-24 (PLFV…FLPI), 41-61 (DATS…AVCW), 83-103 (FVGL…MFHS), 108-128 (LLFN…LILW), 184-204 (AAEF…VYDL), 218-238 (VFAI…KAFI), and 246-266 (FIAF…TWQL).

Belongs to the UppP family.

The protein localises to the cell inner membrane. It carries out the reaction di-trans,octa-cis-undecaprenyl diphosphate + H2O = di-trans,octa-cis-undecaprenyl phosphate + phosphate + H(+). Catalyzes the dephosphorylation of undecaprenyl diphosphate (UPP). Confers resistance to bacitracin. This Aromatoleum aromaticum (strain DSM 19018 / LMG 30748 / EbN1) (Azoarcus sp. (strain EbN1)) protein is Undecaprenyl-diphosphatase.